The following is a 281-amino-acid chain: MTMEALQFLLAAPPGAYDPVARTIEDEPRPSQPPTSALALDIRGLRKSFGDNDVLRGIDLHIPAGQFVTIVGRSGCGKSTLLRLIAGLETPTAGHIVFGEDKLPGDVRVMFQEPRLLPWARVLANVEVGLGTERNSPDARARADAALIEVGLDDKRGEWPAVLSGGQKQRVALARALVSRPRVLAFDEPLGALDALTRIAMQRLLEQVWQAQGFTAILVTHDVAEAVALADRVLVIEDGRIAKDLPIDLPRPRQRGSAELAALEGEILRDLLKGAEDTFEL.

The 224-residue stretch at 40–263 folds into the ABC transporter domain; sequence LDIRGLRKSF…QRGSAELAAL (224 aa). 72–79 provides a ligand contact to ATP; it reads GRSGCGKS.

Belongs to the ABC transporter superfamily. Aliphatic sulfonates importer (TC 3.A.1.17.2) family. As to quaternary structure, the complex is composed of two ATP-binding proteins (SsuB), two transmembrane proteins (SsuC) and a solute-binding protein (SsuA).

The protein localises to the cell inner membrane. The enzyme catalyses ATP + H2O + aliphatic sulfonate-[sulfonate-binding protein]Side 1 = ADP + phosphate + aliphatic sulfonateSide 2 + [sulfonate-binding protein]Side 1.. In terms of biological role, part of the ABC transporter complex SsuABC involved in aliphatic sulfonates import. Responsible for energy coupling to the transport system. This chain is Aliphatic sulfonates import ATP-binding protein SsuB, found in Rhodopseudomonas palustris (strain ATCC BAA-98 / CGA009).